Reading from the N-terminus, the 152-residue chain is Small ribosomal subunit protein uS15 (152 aa).

The span at 1-10 (MAKMHTRTKG) shows a compositional bias: basic residues. A disordered region spans residues 1 to 26 (MAKMHTRTKGKSGSTKPIRSESPAWS). A compositionally biased stretch (polar residues) spans 11–26 (KSGSTKPIRSESPAWS).

Belongs to the universal ribosomal protein uS15 family. In terms of assembly, part of the 30S ribosomal subunit.

This Methanococcoides burtonii (strain DSM 6242 / NBRC 107633 / OCM 468 / ACE-M) protein is Small ribosomal subunit protein uS15.